A 635-amino-acid polypeptide reads, in one-letter code: Threonine--tRNA ligase (635 aa).

A TGS domain is found at 1-61; the sequence is MVSIRLPDGS…DHDVALAIVT (61 aa). Positions 242–533 are catalytic; the sequence is DHRKLGKQLD…LIEHHAGAMP (292 aa). 3 residues coordinate Zn(2+): cysteine 333, histidine 384, and histidine 510.

It belongs to the class-II aminoacyl-tRNA synthetase family. Homodimer. The cofactor is Zn(2+).

It is found in the cytoplasm. The catalysed reaction is tRNA(Thr) + L-threonine + ATP = L-threonyl-tRNA(Thr) + AMP + diphosphate + H(+). Functionally, catalyzes the attachment of threonine to tRNA(Thr) in a two-step reaction: L-threonine is first activated by ATP to form Thr-AMP and then transferred to the acceptor end of tRNA(Thr). Also edits incorrectly charged L-seryl-tRNA(Thr). In Paraburkholderia phymatum (strain DSM 17167 / CIP 108236 / LMG 21445 / STM815) (Burkholderia phymatum), this protein is Threonine--tRNA ligase.